A 161-amino-acid polypeptide reads, in one-letter code: Arachidonate 5-lipoxygenase-activating protein (161 aa).

Residues 1-8 (MDQEAVGN) lie on the Lumenal side of the membrane. The chain crosses the membrane as a helical span at residues 9 to 30 (VVLLALVTLISVVQNAFFAHKV). At 31–52 (EHESKAHNGRSFQRTGTLAFER) the chain is on the cytoplasmic side. A helical membrane pass occupies residues 53–77 (VYTANQNCVDAYPTFLVVLWTAGLL). At 78–80 (CSQ) the chain is on the lumenal side. A helical transmembrane segment spans residues 81–102 (VPAAFAGLMYLFVRQKYFVGYL). Residues 103 to 107 (GERTQ) lie on the Cytoplasmic side of the membrane. The stretch at 108 to 115 (STPGYIFG) is an intramembrane region. Residues 116–128 (KRIILFLFLMSFA) traverse the membrane as a helical segment. Over 129 to 161 (GILNHYLIFFFGSDFENYIRTVSTTISPLLLIP) the chain is Lumenal.

Belongs to the MAPEG family. As to quaternary structure, homotrimer. Interacts with LTC4S and ALOX5.

Its subcellular location is the nucleus membrane. It localises to the endoplasmic reticulum membrane. Required for leukotriene biosynthesis by ALOX5 (5-lipoxygenase). Anchors ALOX5 to the membrane. Binds arachidonic acid, and could play an essential role in the transfer of arachidonic acid to ALOX5. Binds to MK-886, a compound that blocks the biosynthesis of leukotrienes. In Mus musculus (Mouse), this protein is Arachidonate 5-lipoxygenase-activating protein (Alox5ap).